A 205-amino-acid polypeptide reads, in one-letter code: Ribonuclease HII (205 aa).

The RNase H type-2 domain occupies Val16 to Ile205. A divalent metal cation contacts are provided by Asp22, Glu23, and Asp118.

It belongs to the RNase HII family. Requires Mn(2+) as cofactor. The cofactor is Mg(2+).

The protein resides in the cytoplasm. The enzyme catalyses Endonucleolytic cleavage to 5'-phosphomonoester.. Its function is as follows. Endonuclease that specifically degrades the RNA of RNA-DNA hybrids. The polypeptide is Ribonuclease HII (Prochlorococcus marinus (strain AS9601)).